A 602-amino-acid chain; its full sequence is RNA-binding NOB1-like protein (602 aa).

Residues 1 to 25 (MDPKPTSMWSSIVKKDPPSKPPVND) are disordered. Positions 48-134 (VVDANAIIEG…LKLIALSYTL (87 aa)) constitute a PINc domain. Disordered regions lie at residues 258–278 (SQGQ…VSRS) and 301–331 (IQKD…GEDI). Positions 301–329 (IQKDQEADKARHTKEANETHAKDSGKNGE) are enriched in basic and acidic residues. The stretch at 331 to 365 (ISSILKDMRLEEESLRALQEETEETNAEATLINGE) forms a coiled coil. Residues 452 to 522 (IRQLHRWILK…QYSIPMPKGG (71 aa)) form an NOB1 zinc finger. Positions 462, 465, 477, and 480 each coordinate Zn(2+).

The protein belongs to the NOB1 family. In terms of assembly, component of the small ribosomal subunit, ribosomal RNA processing complex (SSU RRP complex). In terms of tissue distribution, highly expressed in flowers and siliques and at lower levels in roots, hypocotyls, stems, leaves and seeds.

It is found in the nucleus. Its subcellular location is the nucleoplasm. The protein resides in the cytoplasm. Its function is as follows. Essential protein required during embryogenesis and pollen development. Endonuclease cleaving pre-rRNA at the 3' end of the mature 18S rRNA (D-site); cleaves 20S pre-rRNA in the cytoplasm. Required for processing of 20S pre-rRNA precursor and biogenesis of 40S ribosomal subunits. This chain is RNA-binding NOB1-like protein, found in Arabidopsis thaliana (Mouse-ear cress).